Here is an 87-residue protein sequence, read N- to C-terminus: Large ribosomal subunit protein bL27 (87 aa).

A disordered region spans residues 1-21; sequence MAHKKAGGSSRNGRDSESKRL.

This sequence belongs to the bacterial ribosomal protein bL27 family.

The chain is Large ribosomal subunit protein bL27 from Paraburkholderia phytofirmans (strain DSM 17436 / LMG 22146 / PsJN) (Burkholderia phytofirmans).